Here is a 432-residue protein sequence, read N- to C-terminus: Enolase (432 aa).

Gln-166 is a (2R)-2-phosphoglycerate binding site. Glu-208 acts as the Proton donor in catalysis. The Mg(2+) site is built by Asp-245, Glu-291, and Asp-318. Residues Lys-343, Arg-372, Ser-373, and Lys-394 each contribute to the (2R)-2-phosphoglycerate site. Lys-343 acts as the Proton acceptor in catalysis.

This sequence belongs to the enolase family. It depends on Mg(2+) as a cofactor.

It is found in the cytoplasm. The protein resides in the secreted. It localises to the cell surface. The catalysed reaction is (2R)-2-phosphoglycerate = phosphoenolpyruvate + H2O. It functions in the pathway carbohydrate degradation; glycolysis; pyruvate from D-glyceraldehyde 3-phosphate: step 4/5. In terms of biological role, catalyzes the reversible conversion of 2-phosphoglycerate (2-PG) into phosphoenolpyruvate (PEP). It is essential for the degradation of carbohydrates via glycolysis. The chain is Enolase from Leptospira borgpetersenii serovar Hardjo-bovis (strain L550).